Reading from the N-terminus, the 398-residue chain is uncharacterized protein (398 aa).

6 helical membrane-spanning segments follow: residues Leu-37–Phe-57, Ile-92–Gly-112, Leu-122–Pro-142, Leu-186–Ile-206, Ile-228–Thr-248, and Phe-268–Leu-288.

The protein localises to the cell membrane. This is an uncharacterized protein from Mycoplasma genitalium (strain ATCC 33530 / DSM 19775 / NCTC 10195 / G37) (Mycoplasmoides genitalium).